We begin with the raw amino-acid sequence, 165 residues long: Basic leucine zipper 43 (165 aa).

One can recognise a bZIP domain in the interval 70–133 (NERKQKRKIS…EKVIEENVQL (64 aa)). The segment at 72-93 (RKQKRKISNRESARRSRMRKQR) is basic motif. Residues 98-112 (LWSQVMWLRDENHQL) are leucine-zipper.

As to quaternary structure, forms heterodimers with BZIP34 and BZIP61.

It is found in the nucleus. Its function is as follows. Probable transcription factor involved in somatic embryogenesis. Acts as a positive regulator of BHLH109. The chain is Basic leucine zipper 43 from Arabidopsis thaliana (Mouse-ear cress).